The chain runs to 234 residues: Phosphoglycolate phosphatase (234 aa).

D8 serves as the catalytic Nucleophile. Residues D8 and D10 each contribute to the Mg(2+) site. Substrate is bound at residue K155. Mg(2+)-binding residues include D178 and D182.

The protein belongs to the archaeal SPP-like hydrolase family. Mg(2+) is required as a cofactor.

It carries out the reaction 2-phosphoglycolate + H2O = glycolate + phosphate. Catalyzes the dephosphorylation of 2-phosphoglycolate. The polypeptide is Phosphoglycolate phosphatase (Thermococcus sibiricus (strain DSM 12597 / MM 739)).